A 393-amino-acid chain; its full sequence is S-adenosylmethionine synthase (393 aa).

Histidine 17 lines the ATP pocket. Aspartate 19 is a binding site for Mg(2+). Glutamate 45 contributes to the K(+) binding site. L-methionine is bound by residues glutamate 58 and glutamine 106. The segment at 106-116 is flexible loop; it reads QSAHIAQGVNA. Residues 171–173, 237–238, aspartate 246, 252–253, alanine 269, and lysine 273 each bind ATP; these read DAK, KF, and RK. Aspartate 246 provides a ligand contact to L-methionine. Lysine 277 lines the L-methionine pocket.

It belongs to the AdoMet synthase family. In terms of assembly, homotetramer; dimer of dimers. Mg(2+) serves as cofactor. The cofactor is K(+).

It localises to the cytoplasm. It catalyses the reaction L-methionine + ATP + H2O = S-adenosyl-L-methionine + phosphate + diphosphate. Its pathway is amino-acid biosynthesis; S-adenosyl-L-methionine biosynthesis; S-adenosyl-L-methionine from L-methionine: step 1/1. Functionally, catalyzes the formation of S-adenosylmethionine (AdoMet) from methionine and ATP. The overall synthetic reaction is composed of two sequential steps, AdoMet formation and the subsequent tripolyphosphate hydrolysis which occurs prior to release of AdoMet from the enzyme. This is S-adenosylmethionine synthase from Ruegeria pomeroyi (strain ATCC 700808 / DSM 15171 / DSS-3) (Silicibacter pomeroyi).